A 253-amino-acid chain; its full sequence is Small ribosomal subunit protein uS3 (253 aa).

Positions 39–109 constitute a KH type-2 domain; the sequence is IRNYVLARLK…EVKIDVVEVI (71 aa). The disordered stretch occupies residues 220–253; the sequence is DEMKKMKDRRNDGGAKGRDSRDNRSKRRSRSKRS. The segment covering 221 to 242 has biased composition (basic and acidic residues); sequence EMKKMKDRRNDGGAKGRDSRDN. A compositionally biased stretch (basic residues) spans 243–253; that stretch reads RSKRRSRSKRS.

It belongs to the universal ribosomal protein uS3 family. In terms of assembly, part of the 30S ribosomal subunit. Forms a tight complex with proteins S10 and S14.

Its function is as follows. Binds the lower part of the 30S subunit head. Binds mRNA in the 70S ribosome, positioning it for translation. The protein is Small ribosomal subunit protein uS3 of Chlorobium chlorochromatii (strain CaD3).